The chain runs to 92 residues: Large ribosomal subunit protein eL43 (92 aa).

4 residues coordinate Zn(2+): Cys39, Cys42, Cys57, and Cys60. The C4-type zinc-finger motif lies at 39–60 (CPVCGFPKLKRASTSIWVCGKC).

This sequence belongs to the eukaryotic ribosomal protein eL43 family. Putative zinc-binding subfamily. As to quaternary structure, part of the 50S ribosomal subunit. Zn(2+) serves as cofactor.

Its function is as follows. Binds to the 23S rRNA. This chain is Large ribosomal subunit protein eL43, found in Methanocaldococcus jannaschii (strain ATCC 43067 / DSM 2661 / JAL-1 / JCM 10045 / NBRC 100440) (Methanococcus jannaschii).